Consider the following 249-residue polypeptide: Histone H1 (249 aa).

Low complexity-rich tracts occupy residues 1-19 (MSDSVVAVSASPVTPQTAS) and 27-43 (KKPASASASKAKKTTAP). Disordered regions lie at residues 1–53 (MSDS…QQMV) and 105–249 (QTKG…ATKK). Residues 45–119 (THPPTQQMVD…GASGSFKLSA (75 aa)) enclose the H15 domain. Residues 121 to 134 (SKKEPKPKVSSVEK) show a composition bias toward basic and acidic residues. Over residues 146-158 (AKKKTISATKKPK) the composition is skewed to basic residues. Residues 173–190 (KSVDKKKAEKAKAKDAKK) are compositionally biased toward basic and acidic residues. Residues 195–233 (KAKPTTAKAKSSAAKPKTPKPKTTSAKPKKVVAAASPKK) show a composition bias toward low complexity. The segment covering 234–249 (AAAKKPKAKTASATKK) has biased composition (basic residues).

The protein belongs to the histone H1/H5 family.

Its subcellular location is the nucleus. The protein resides in the chromosome. Functionally, histones H1 are necessary for the condensation of nucleosome chains into higher-order structures. The chain is Histone H1 (His1) from Drosophila hydei (Fruit fly).